A 2180-amino-acid polypeptide reads, in one-letter code: DNA polymerase epsilon catalytic subunit A (2180 aa).

Zn(2+) contacts are provided by C2067, C2070, C2089, and C2092. The segment at 2067–2092 adopts a CysA-type zinc-finger fold; it reads CENCAYFSDLDICMSDLRSMFKCSKC. Residues C2123, C2126, C2138, and C2140 each coordinate [4Fe-4S] cluster. Positions 2123–2140 match the CysB motif motif; the sequence is CAKCRKIKSDTMSAYCTC.

It belongs to the DNA polymerase type-B family. In terms of assembly, heterotetramer. Consists of 4 subunits: POL2, DPB2, DPB3 and DPB4. [4Fe-4S] cluster serves as cofactor.

The protein localises to the nucleus. It catalyses the reaction DNA(n) + a 2'-deoxyribonucleoside 5'-triphosphate = DNA(n+1) + diphosphate. In terms of biological role, DNA polymerase II participates in chromosomal DNA replication. This is DNA polymerase epsilon catalytic subunit A (POL2) from Eremothecium gossypii (strain ATCC 10895 / CBS 109.51 / FGSC 9923 / NRRL Y-1056) (Yeast).